The chain runs to 874 residues: Alanine--tRNA ligase (874 aa).

Zn(2+)-binding residues include H562, H566, C665, and H669.

It belongs to the class-II aminoacyl-tRNA synthetase family. The cofactor is Zn(2+).

It is found in the cytoplasm. It catalyses the reaction tRNA(Ala) + L-alanine + ATP = L-alanyl-tRNA(Ala) + AMP + diphosphate. In terms of biological role, catalyzes the attachment of alanine to tRNA(Ala) in a two-step reaction: alanine is first activated by ATP to form Ala-AMP and then transferred to the acceptor end of tRNA(Ala). Also edits incorrectly charged Ser-tRNA(Ala) and Gly-tRNA(Ala) via its editing domain. This is Alanine--tRNA ligase from Pseudomonas putida (strain ATCC 47054 / DSM 6125 / CFBP 8728 / NCIMB 11950 / KT2440).